Here is a 306-residue protein sequence, read N- to C-terminus: Aspartate carbamoyltransferase catalytic subunit (306 aa).

The carbamoyl phosphate site is built by R51 and T52. K79 contributes to the L-aspartate binding site. 3 residues coordinate carbamoyl phosphate: R101, H129, and Q132. Residues R162 and R213 each contribute to the L-aspartate site. Carbamoyl phosphate-binding residues include A254 and P255.

This sequence belongs to the aspartate/ornithine carbamoyltransferase superfamily. ATCase family. Heterododecamer (2C3:3R2) of six catalytic PyrB chains organized as two trimers (C3), and six regulatory PyrI chains organized as three dimers (R2).

The enzyme catalyses carbamoyl phosphate + L-aspartate = N-carbamoyl-L-aspartate + phosphate + H(+). Its pathway is pyrimidine metabolism; UMP biosynthesis via de novo pathway; (S)-dihydroorotate from bicarbonate: step 2/3. Its function is as follows. Catalyzes the condensation of carbamoyl phosphate and aspartate to form carbamoyl aspartate and inorganic phosphate, the committed step in the de novo pyrimidine nucleotide biosynthesis pathway. The sequence is that of Aspartate carbamoyltransferase catalytic subunit from Bacillus thuringiensis (strain Al Hakam).